A 504-amino-acid polypeptide reads, in one-letter code: SPbeta prophage-derived uncharacterized protein YorI (504 aa).

The chain is SPbeta prophage-derived uncharacterized protein YorI (yorI) from Bacillus subtilis (strain 168).